Consider the following 171-residue polypeptide: Flavodoxin (171 aa).

The Flavodoxin-like domain occupies 4 to 165; that stretch reads IGIFFGSDTG…RIKQWVKQII (162 aa).

The protein belongs to the flavodoxin family. Requires FMN as cofactor.

In terms of biological role, low-potential electron donor to a number of redox enzymes. In Buchnera aphidicola subsp. Acyrthosiphon pisum (strain APS) (Acyrthosiphon pisum symbiotic bacterium), this protein is Flavodoxin (fldA).